Consider the following 94-residue polypeptide: MLKPLGDRVVIELVESEEKTASGIVLPDSAKEKPQEGKVVAAGSGRVLESGERVALEVKTGDRIIFSKYAGTEVKYEGTDYLILRESDILAVIG.

The protein belongs to the GroES chaperonin family. In terms of assembly, heptamer of 7 subunits arranged in a ring. Interacts with the chaperonin GroEL.

It is found in the cytoplasm. Its function is as follows. Together with the chaperonin GroEL, plays an essential role in assisting protein folding. The GroEL-GroES system forms a nano-cage that allows encapsulation of the non-native substrate proteins and provides a physical environment optimized to promote and accelerate protein folding. GroES binds to the apical surface of the GroEL ring, thereby capping the opening of the GroEL channel. This chain is Co-chaperonin GroES, found in Bacillus licheniformis (strain ATCC 14580 / DSM 13 / JCM 2505 / CCUG 7422 / NBRC 12200 / NCIMB 9375 / NCTC 10341 / NRRL NRS-1264 / Gibson 46).